A 412-amino-acid chain; its full sequence is Probable beta-1,4-xylosyltransferase IRX10 (412 aa).

A helical; Signal-anchor for type II membrane protein membrane pass occupies residues 1-21 (MKIHSCLSAILLFLFFSASSA). At 22–412 (KQNVRTERIS…AGPVADLKPW (391 aa)) the chain is on the lumenal side. Residues N139 and N400 are each glycosylated (N-linked (GlcNAc...) asparagine).

The protein belongs to the glycosyltransferase 47 family. As to expression, limited to xylem cells. Expressed in the root tip, xylem cells of roots, and in the vasculature of roots, cotyledons and leaves.

It is found in the golgi apparatus membrane. Its function is as follows. Involved in the synthesis of the hemicellulose glucuronoxylan, a major component of secondary cell walls. Probably involved in the elongation of glucuronoxylan xylosyl backbone, especially in the formation of GlcUA side chain of xylans. This chain is Probable beta-1,4-xylosyltransferase IRX10 (IRX10), found in Arabidopsis thaliana (Mouse-ear cress).